A 100-amino-acid polypeptide reads, in one-letter code: Urease subunit gamma (100 aa).

It belongs to the urease gamma subunit family. As to quaternary structure, heterotrimer of UreA (gamma), UreB (beta) and UreC (alpha) subunits. Three heterotrimers associate to form the active enzyme.

The protein resides in the cytoplasm. It carries out the reaction urea + 2 H2O + H(+) = hydrogencarbonate + 2 NH4(+). It functions in the pathway nitrogen metabolism; urea degradation; CO(2) and NH(3) from urea (urease route): step 1/1. The chain is Urease subunit gamma from Streptomyces griseus subsp. griseus (strain JCM 4626 / CBS 651.72 / NBRC 13350 / KCC S-0626 / ISP 5235).